A 359-amino-acid chain; its full sequence is Glycerol-3-phosphate dehydrogenase [NAD(P)+] (359 aa).

Residues T11, W12, R32, and K107 each coordinate NADPH. Sn-glycerol 3-phosphate-binding residues include K107 and G138. A142 lines the NADPH pocket. Positions 193, 246, 256, 257, and 258 each coordinate sn-glycerol 3-phosphate. K193 (proton acceptor) is an active-site residue. Position 257 (R257) interacts with NADPH. NADPH is bound by residues V281 and E283.

It belongs to the NAD-dependent glycerol-3-phosphate dehydrogenase family.

The protein resides in the cytoplasm. It carries out the reaction sn-glycerol 3-phosphate + NAD(+) = dihydroxyacetone phosphate + NADH + H(+). It catalyses the reaction sn-glycerol 3-phosphate + NADP(+) = dihydroxyacetone phosphate + NADPH + H(+). Its pathway is membrane lipid metabolism; glycerophospholipid metabolism. Functionally, catalyzes the reduction of the glycolytic intermediate dihydroxyacetone phosphate (DHAP) to sn-glycerol 3-phosphate (G3P), the key precursor for phospholipid synthesis. This is Glycerol-3-phosphate dehydrogenase [NAD(P)+] from Dehalococcoides mccartyi (strain ATCC BAA-2100 / JCM 16839 / KCTC 5957 / BAV1).